The following is a 273-amino-acid chain: Putative pyruvate, phosphate dikinase regulatory protein (273 aa).

An ADP-binding site is contributed by 153–160 (GISRTSKT).

The protein belongs to the pyruvate, phosphate/water dikinase regulatory protein family. PDRP subfamily.

It catalyses the reaction N(tele)-phospho-L-histidyl/L-threonyl-[pyruvate, phosphate dikinase] + ADP = N(tele)-phospho-L-histidyl/O-phospho-L-threonyl-[pyruvate, phosphate dikinase] + AMP + H(+). The catalysed reaction is N(tele)-phospho-L-histidyl/O-phospho-L-threonyl-[pyruvate, phosphate dikinase] + phosphate + H(+) = N(tele)-phospho-L-histidyl/L-threonyl-[pyruvate, phosphate dikinase] + diphosphate. Functionally, bifunctional serine/threonine kinase and phosphorylase involved in the regulation of the pyruvate, phosphate dikinase (PPDK) by catalyzing its phosphorylation/dephosphorylation. The sequence is that of Putative pyruvate, phosphate dikinase regulatory protein from Agrobacterium fabrum (strain C58 / ATCC 33970) (Agrobacterium tumefaciens (strain C58)).